We begin with the raw amino-acid sequence, 440 residues long: P47(GAG-CRK) protein (440 aa).

Residues 1 to 208 (MEAVIKVISS…TPRGAEQPRA (208 aa)) form a gag first part region. Positions 174–177 (PPPY) match the PPXY motif motif. The tract at residues 183 to 230 (YPSLAGVGEQQGQGGDTPRGAEQPRAGRGAGHRGLRRPAGRGQRVRPA) is disordered. Residues 209–437 (GRGAGHRGLR…PSSASVSTLT (229 aa)) are CRK. Residues 212–221 (AGHRGLRRPA) are compositionally biased toward basic residues. In terms of domain architecture, SH2 spans 248 to 354 (WYWGRLSRGD…LDTTTLIEPV (107 aa)). The region spanning 368-428 (EEVEYVRALF…PVPYVEKCRP (61 aa)) is the SH3 domain. A gag second part region spans residues 438 to 440 (GGR).

The chain is P47(GAG-CRK) protein from Avian sarcoma virus CT10 (Avian sarcoma virus (strain CT10)).